A 57-amino-acid polypeptide reads, in one-letter code: Conotoxin Cal6.34 (57 aa).

Residues 1–22 (MKLTCVLIVAVLILTACQVIAA) form the signal peptide. Cystine bridges form between C26-C37, C29-C43, and C36-C54.

It belongs to the conotoxin O1 superfamily. Expressed by the venom duct.

It is found in the secreted. In terms of biological role, probable neurotoxin. The protein is Conotoxin Cal6.34 of Californiconus californicus (California cone).